We begin with the raw amino-acid sequence, 267 residues long: Glutamate racemase (267 aa).

Residues 13 to 14 and 45 to 46 contribute to the substrate site; these read DS and YS. The active-site Proton donor/acceptor is the C77. 78-79 is a substrate binding site; that stretch reads NT. Residue C188 is the Proton donor/acceptor of the active site. 189-190 serves as a coordination point for substrate; the sequence is TH.

This sequence belongs to the aspartate/glutamate racemases family.

It catalyses the reaction L-glutamate = D-glutamate. It participates in cell wall biogenesis; peptidoglycan biosynthesis. Functionally, provides the (R)-glutamate required for cell wall biosynthesis. In Histophilus somni (strain 129Pt) (Haemophilus somnus), this protein is Glutamate racemase.